We begin with the raw amino-acid sequence, 226 residues long: MEPIKNLPRLCRTLGYEFSDIRLLEQALTHRSASNQHNERLEFLGDSILSIVISDALFHQFPKATEGDLSRMRATLVRGDTLAVIAKEFKLGDYLNLGPGELKSGGFRRESILADAVEAIIGAVYLDADLETCRSLLLGWYETRLADIKPGVGQKDAKTLLQEYLQGMKKPLPEYQVTQVEGEAHDQTFTVECRVTDLADAVVGVGSSRRKAEQMAAAQVLELLNQ.

Residues 7 to 129 (LPRLCRTLGY…IIGAVYLDAD (123 aa)) enclose the RNase III domain. Mg(2+) is bound at residue Glu-42. The active site involves Asp-46. Positions 115 and 118 each coordinate Mg(2+). Glu-118 is a catalytic residue. The DRBM domain occupies 156 to 226 (DAKTLLQEYL…AAQVLELLNQ (71 aa)).

The protein belongs to the ribonuclease III family. In terms of assembly, homodimer. It depends on Mg(2+) as a cofactor.

The protein resides in the cytoplasm. The catalysed reaction is Endonucleolytic cleavage to 5'-phosphomonoester.. In terms of biological role, digests double-stranded RNA. Involved in the processing of primary rRNA transcript to yield the immediate precursors to the large and small rRNAs (23S and 16S). Processes some mRNAs, and tRNAs when they are encoded in the rRNA operon. Processes pre-crRNA and tracrRNA of type II CRISPR loci if present in the organism. This is Ribonuclease 3 from Shewanella amazonensis (strain ATCC BAA-1098 / SB2B).